The chain runs to 454 residues: UDP-N-acetylmuramoylalanine--D-glutamate ligase (454 aa).

117–123 is an ATP binding site; it reads GTNGKTT.

This sequence belongs to the MurCDEF family.

It is found in the cytoplasm. The catalysed reaction is UDP-N-acetyl-alpha-D-muramoyl-L-alanine + D-glutamate + ATP = UDP-N-acetyl-alpha-D-muramoyl-L-alanyl-D-glutamate + ADP + phosphate + H(+). It functions in the pathway cell wall biogenesis; peptidoglycan biosynthesis. Cell wall formation. Catalyzes the addition of glutamate to the nucleotide precursor UDP-N-acetylmuramoyl-L-alanine (UMA). This is UDP-N-acetylmuramoylalanine--D-glutamate ligase from Alkaliphilus oremlandii (strain OhILAs) (Clostridium oremlandii (strain OhILAs)).